Here is a 64-residue protein sequence, read N- to C-terminus: Disintegrin (64 aa).

Residues 1–64 (NSVHPCCDPV…SDCPRNRYNH (64 aa)) form the Disintegrin domain. 4 cysteine pairs are disulfide-bonded: cysteine 6–cysteine 29, cysteine 20–cysteine 26, cysteine 25–cysteine 50, and cysteine 38–cysteine 57. The short motif at 42–44 (MLD) is the Cell attachment site; atypical (MLD) element.

Belongs to the disintegrin family. Dimeric disintegrin subfamily. Heterodimer; disulfide-linked. Expressed by the venom gland.

The protein resides in the secreted. Its function is as follows. Inhibits adhesion of cells expressing alpha-4/beta-1 (ITGA4/ITGB1) and alpha-4/beta-7 (ITGA4/ITGB7) integrins to the natural ligands vascular cell adhesion molecule 1 (VCAM-1) and mucosal addressin cell adhesion molecule 1 (MADCAM-1). This Echis carinatus (Saw-scaled viper) protein is Disintegrin.